Reading from the N-terminus, the 428-residue chain is E3 ubiquitin-protein ligase RNF128 (428 aa).

The N-terminal stretch at 1 to 38 (MGPPLGAGVSCRGGCGSSRLLAWCFLLALSPQAPGSRG) is a signal peptide. 3 N-linked (GlcNAc...) asparagine glycosylation sites follow: N48, N59, and N101. Residues 75–183 (SPLEPVAGVL…LKGTKILQSI (109 aa)) form the PA domain. Residues 208 to 228 (IFFVSVSFFIITAATVGYFIF) traverse the membrane as a helical segment. An RING-type; atypical zinc finger spans residues 277–318 (CAVCIELYKPNDLVRILTCNHIFHKTCVDPWLLEHRTCPMCK). The segment at 346–428 (ISNSASSHEE…QETAVREIKS (83 aa)) is disordered. A compositionally biased stretch (basic and acidic residues) spans 416 to 428 (TPHQETAVREIKS).

In terms of processing, auto-ubiquitinated. Controls the development of T-cell clonal anergy by ubiquitination.

The protein localises to the cytoplasm. Its subcellular location is the endomembrane system. It is found in the cytoskeleton. It localises to the perinuclear region. The enzyme catalyses S-ubiquitinyl-[E2 ubiquitin-conjugating enzyme]-L-cysteine + [acceptor protein]-L-lysine = [E2 ubiquitin-conjugating enzyme]-L-cysteine + N(6)-ubiquitinyl-[acceptor protein]-L-lysine.. The protein operates within protein modification; protein ubiquitination. Functionally, E3 ubiquitin-protein ligase that catalyzes 'Lys-27', 'Lys-48'- or 'Lys-63'-linked polyubiquitin chains formation and plays a role in different biological processes such as modulation of immune response, cytoskeletal dynamics or protein homeostasis. Inhibits IL2 and IL4 transcription, thereby playing an important role in the induction of the anergic phenotype, a long-term stable state of T-lymphocyte unresponsiveness to antigenic stimulation associated with the blockade of interleukin production. Ubiquitinates ARPC5 with 'Lys-48' linkages and COR1A with 'Lys-63' linkages leading to their degradation, down-regulation of these cytoskeletal components results in impaired lamellipodium formation and reduced accumulation of F-actin at the immunological synapse. Functions in the patterning of the dorsal ectoderm; sensitizes ectoderm to respond to neural-inducing signals. Plays a positive role in innate immune response by promoting 'Lys-63'-linked ubiquitination of TBK1 after RNA- or DNA-virus infection. Regulates alveolar macrophage activation and neutrophil infiltration by interacting with TLR4, targeting it for degradation, and inhibiting NF-kappa-B activation, hence decreasing pro-inflammatory cytokines. Negatively regulates the IL-3/STAT5 signaling pathway by facilitating 'Lys-27'-linked polyubiquitination of IL3RA leading to its degradation via lysosomal pathway. Directly regulates the N-glycosylation process in the endoplasmic reticulum by targeting the glycosyl-transferase RPN1 for ubiquitination and degradation. Other substrates targeted for degradation by RNF128 include transmembrane proteins CD40L, CD83 or the tetraspanin CD151. The protein is E3 ubiquitin-protein ligase RNF128 (RNF128) of Pongo abelii (Sumatran orangutan).